A 314-amino-acid polypeptide reads, in one-letter code: Ketimine reductase mu-crystallin (314 aa).

Position 47 (Arg-47) interacts with 3,3',5-triiodo-L-thyronine. The NADPH site is built by Asp-82, His-92, Arg-119, Ala-144, Val-146, Gln-147, Asn-168, Arg-169, Thr-170, Asn-173, Thr-205, Leu-206, Val-226, and Ala-228. A 3,3',5-triiodo-L-thyronine-binding site is contributed by Glu-257. Ser-292 provides a ligand contact to NADPH.

This sequence belongs to the ornithine cyclodeaminase/mu-crystallin family. As to quaternary structure, homodimer. Binds the thyroid hormone triiodothyronine (T3); T3 binding inhibits enzymatic activity. As to expression, expressed in neural tissues, muscle and kidney. Expressed in the inner ear.

It is found in the cytoplasm. The catalysed reaction is L-pipecolate + NADP(+) = Delta(1)-piperideine-2-carboxylate + NADPH + H(+). It catalyses the reaction L-pipecolate + NAD(+) = Delta(1)-piperideine-2-carboxylate + NADH + H(+). It carries out the reaction L-proline + NADP(+) = 1-pyrroline-2-carboxylate + NADPH + H(+). The enzyme catalyses L-proline + NAD(+) = 1-pyrroline-2-carboxylate + NADH + H(+). The catalysed reaction is (3R)-1,4-thiomorpholine-3-carboxylate + NAD(+) = 3,4-dehydrothiomorpholine-3-carboxylate + NADH + 2 H(+). It catalyses the reaction (3R)-1,4-thiomorpholine-3-carboxylate + NADP(+) = 3,4-dehydrothiomorpholine-3-carboxylate + NADPH + 2 H(+). It carries out the reaction (S)-cystathionine ketimine + NADH + 2 H(+) = (3R,5S)-2,3,5,6,7-pentahydro-1,4-thiazepine-3,5-dicarboxylate + NAD(+). The enzyme catalyses (S)-cystathionine ketimine + NADPH + 2 H(+) = (3R,5S)-2,3,5,6,7-pentahydro-1,4-thiazepine-3,5-dicarboxylate + NADP(+). The catalysed reaction is (R)-lanthionine ketimine + NADPH + 2 H(+) = (3R,5R)-1,4-thiomorpholine-3,5-dicarboxylate + NADP(+). It catalyses the reaction Delta(2)-thiazoline-2-carboxylate + NADPH + 2 H(+) = L-thiazolidine-2-carboxylate + NADP(+). With respect to regulation, inhibited by thyroid hormones triiodothyronine (T3) and thyroxine (T4). Catalyzes the NAD(P)H-dependent reduction of imine double bonds of a number of cyclic ketimine substrates, including sulfur-containing cyclic ketimines. Under physiological conditions, it efficiently catalyzes delta(1)-piperideine-2-carboxylate (P2C) and delta(1)-pyrroline-2-carboxylate (Pyr2C) reduction, suggesting a central role in lysine and glutamate metabolism. Additional substrates are delta(2)-thiazoline-2-carboxylate (T2C), 3,4-dehydrothiomorpholine-3-carboxylate (AECK), and (R)-lanthionine ketimine (LK) that is reduced at very low rate compared to other substrates. Also catalyzes the NAD(P)H-dependent reduction of (S)-cystathionine ketimine (CysK). This chain is Ketimine reductase mu-crystallin, found in Homo sapiens (Human).